The following is a 107-amino-acid chain: Sulfurtransferase Alvin_2599 (107 aa).

One can recognise a Rhodanese domain in the interval 16 to 104 (DTEDVLLVDI…WARHGLPIVA (89 aa)). C64 (cysteine persulfide intermediate) is an active-site residue.

In terms of assembly, monomer.

The protein localises to the cytoplasm. It functions in the pathway energy metabolism; sulfur metabolism. Functionally, sulfur carrier protein involved in sulfur trafficking for oxidative dissimilatory sulfur metabolism. Component of a sulfur relay system that starts with the sulfur-mobilizing rhodanese-like protein Rhd_2599 (Alvin_2599), which transfers the sulfur from a low-molecular-weight thiol, maybe glutathione, to the TusA protein (Alvin_2600); TusA serves as the sulfur donor for DsrEFH, which persulfurates DsrC; persulfurated DsrC very probably serves as a direct substrate for reverse-acting sulfite reductase, DsrAB. Is able to catalyze the sulfur transfer reaction from thiosulfate or glutathione (GSSH) to cyanide in vitro, however, thiosulfate is unlikely an in vivo substrate. This Allochromatium vinosum (strain ATCC 17899 / DSM 180 / NBRC 103801 / NCIMB 10441 / D) (Chromatium vinosum) protein is Sulfurtransferase Alvin_2599.